The primary structure comprises 445 residues: Histone acetyltransferase ESA1 (445 aa).

S17 is subject to Phosphoserine. Residues 22-74 (IIKCQCWVQKNDEERLAEILSINTRKAPPKFYVHYVNYNKRLDEWITTDRINL) form the Tudor-knot domain. The disordered stretch occupies residues 88–114 (EDNKKQKKKKATNTSETPQDSLQDGVD). Polar residues predominate over residues 99–109 (TNTSETPQDSL). The MYST-type HAT domain occupies 162–433 (ARVRNLNRII…IDPNRLIWKP (272 aa)). The segment at 195 to 220 (IYIDDFTLQYFGSKKQYERYRKKCTL) adopts a C2HC MYST-type; degenerate zinc-finger fold. The ESA1-RPD3 motif motif lies at 245–266 (RTWCRNLCLLSKLFLDHKTLYY). The residue at position 262 (K262) is an N6-acetyllysine; by autocatalysis. Acetyl-CoA contacts are provided by residues 303 to 307 (ACILT) and 312 to 318 (QRMGYGK). E338 functions as the Proton donor/acceptor in the catalytic mechanism. Residue S342 coordinates acetyl-CoA.

This sequence belongs to the MYST (SAS/MOZ) family. In terms of assembly, component of the NuA4 histone acetyltransferase complex composed of at least ACT1, ARP4, EAF3, EAF5, EAF6, EAF7, EPL1, ESA1, SWC4, TRA1, VID21, YAF9 and YNG2. The complex interacts with histones H4 (HHF1 and HHF2), H3 (HHT1 and HHT2) and H2A (HTA1 and HTA2). Post-translationally, autoacetylation at Lys-262 is required for proper function.

The catalysed reaction is L-lysyl-[histone] + acetyl-CoA = N(6)-acetyl-L-lysyl-[histone] + CoA + H(+). It carries out the reaction L-lysyl-[protein] + acetyl-CoA = N(6)-acetyl-L-lysyl-[protein] + CoA + H(+). It catalyses the reaction 2-hydroxyisobutanoyl-CoA + L-lysyl-[protein] = N(6)-(2-hydroxyisobutanoyl)-L-lysyl-[protein] + CoA + H(+). The enzyme catalyses (2E)-butenoyl-CoA + L-lysyl-[protein] = N(6)-(2E)-butenoyl-L-lysyl-[protein] + CoA + H(+). In terms of biological role, catalytic component of the NuA4 histone acetyltransferase (HAT), a multiprotein complex involved in epigenetic transcriptional activation of selected genes principally by acetylation of nucleosomal histones H4, H3, H2B, H2A and H2A variant H2A.Z. Acetylates histone H4 to form H4K5ac, H4K8ac, H4K12ac and H4K16ac, histone H3 to form H3K14ac, histone H2B to form H2BK16ac, histone H2A to form H2AK4ac and H2AK7ac, and histone variant H2A.Z to form H2A.ZK14ac. Acetylation of histones gives a specific tag for epigenetic transcription initiation and elongation. Acetylation of histone H4 is essential for DNA double-strand break repair through homologous recombination. Involved in cell cycle progression. Recruitment to promoters depends on H3K4me. Also acetylates non-histone proteins, such as ATG3 and PAH1. Regulates autophagy by acetylating ATG3, controlling interaction the interaction between ATG3 and ATG8 and ATG8 lipidation. Acts as a regulator of fatty-acid-induced triacylglycerol synthesis by catalyzing acetylation of PAH1, thereby promoting the synthesis of diacylglycerol. In addition to protein acetyltransferase, can use different acyl-CoA substrates, such as 2-hydroxyisobutanoyl-CoA (2-hydroxyisobutyryl-CoA) or (2E)-butenoyl-CoA (crotonyl-CoA), and is able to mediate protein 2-hydroxyisobutyrylation and crotonylation, respectively. Catalyzes histone crotonylation. The chain is Histone acetyltransferase ESA1 from Saccharomyces cerevisiae (strain ATCC 204508 / S288c) (Baker's yeast).